The following is an 81-amino-acid chain: MSHSVKIYNTCIGCTQCVRACPTDVLEMVPWDGCKAGQIASSPRTEDCVGCKRCESACPTDFLSVRVYLGSETSRSMGLAY.

4Fe-4S ferredoxin-type domains lie at 2 to 31 (SHSVKIYNTCIGCTQCVRACPTDVLEMVPW) and 37 to 68 (GQIASSPRTEDCVGCKRCESACPTDFLSVRVY). The [4Fe-4S] cluster site is built by cysteine 11, cysteine 14, cysteine 17, cysteine 21, cysteine 48, cysteine 51, cysteine 54, and cysteine 58.

As to quaternary structure, the eukaryotic PSI reaction center is composed of at least 11 subunits. [4Fe-4S] cluster is required as a cofactor.

The protein resides in the plastid. It localises to the chloroplast thylakoid membrane. The enzyme catalyses reduced [plastocyanin] + hnu + oxidized [2Fe-2S]-[ferredoxin] = oxidized [plastocyanin] + reduced [2Fe-2S]-[ferredoxin]. Apoprotein for the two 4Fe-4S centers FA and FB of photosystem I (PSI); essential for photochemical activity. FB is the terminal electron acceptor of PSI, donating electrons to ferredoxin. The C-terminus interacts with PsaA/B/D and helps assemble the protein into the PSI complex. Required for binding of PsaD and PsaE to PSI. PSI is a plastocyanin/cytochrome c6-ferredoxin oxidoreductase, converting photonic excitation into a charge separation, which transfers an electron from the donor P700 chlorophyll pair to the spectroscopically characterized acceptors A0, A1, FX, FA and FB in turn. The protein is Photosystem I iron-sulfur center of Euglena gracilis.